A 442-amino-acid chain; its full sequence is ATP-dependent protease ATPase subunit HslU (442 aa).

ATP contacts are provided by residues I18, 60 to 65 (GVGKTE), D255, E320, and R392.

Belongs to the ClpX chaperone family. HslU subfamily. As to quaternary structure, a double ring-shaped homohexamer of HslV is capped on each side by a ring-shaped HslU homohexamer. The assembly of the HslU/HslV complex is dependent on binding of ATP.

Its subcellular location is the cytoplasm. Functionally, ATPase subunit of a proteasome-like degradation complex; this subunit has chaperone activity. The binding of ATP and its subsequent hydrolysis by HslU are essential for unfolding of protein substrates subsequently hydrolyzed by HslV. HslU recognizes the N-terminal part of its protein substrates and unfolds these before they are guided to HslV for hydrolysis. The sequence is that of ATP-dependent protease ATPase subunit HslU from Hahella chejuensis (strain KCTC 2396).